Here is a 492-residue protein sequence, read N- to C-terminus: Proline--tRNA ligase (492 aa).

Belongs to the class-II aminoacyl-tRNA synthetase family. ProS type 3 subfamily. In terms of assembly, homodimer.

The protein resides in the cytoplasm. It carries out the reaction tRNA(Pro) + L-proline + ATP = L-prolyl-tRNA(Pro) + AMP + diphosphate. In terms of biological role, catalyzes the attachment of proline to tRNA(Pro) in a two-step reaction: proline is first activated by ATP to form Pro-AMP and then transferred to the acceptor end of tRNA(Pro). This is Proline--tRNA ligase from Christiangramia forsetii (strain DSM 17595 / CGMCC 1.15422 / KT0803) (Gramella forsetii).